Reading from the N-terminus, the 428-residue chain is Sporulation kinase C (428 aa).

2 helical membrane-spanning segments follow: residues 8-28 (IISIILAMIFIMFWDYLFYFI) and 36-56 (PVDIVYTAVTLVSVWMLAYYI). The region spanning 76-147 (LSEEKNRIMD…NTQIQNKASS (72 aa)) is the PAS domain. In terms of domain architecture, PAC spans 148–200 (GMFTAKYVTKNGTIFWGEVHYKLYYDRDDQFTGSLGTMSDITERKEAEDELIE). The Histidine kinase domain maps to 221 to 426 (GIAHEVRNPL…VFQVVLPLKS (206 aa)). His224 is modified (phosphohistidine; by autocatalysis).

Oligomerizes, probably forms homodimers; oligomerization is assisted by FloT. Interacts with FloT. Another study shows only rare colocalization with FloT or FloA membrane assemblies. KinC membrane assemblies are more mobile than FloT membrane assemblies.

The protein localises to the cell membrane. It localises to the membrane raft. The enzyme catalyses ATP + protein L-histidine = ADP + protein N-phospho-L-histidine.. Functionally, phosphorylates the sporulation-regulatory protein Spo0A a transcription factor that also controls biofilm formation. Requires FloT and FloA for localization to DRMs and for activity. This chain is Sporulation kinase C, found in Bacillus subtilis (strain 168).